A 125-amino-acid polypeptide reads, in one-letter code: MAKKKKKQKRQVTKAIVHIHTTFNNTIVNVTDTQGNTIAWASGGTVGFKGTRKSTPYAAQLAAQKAMKEAKEHGVQEVEIWVKGPGAGRESAVRAVFASGVKVTAIRDVTPIPHNGCRPPARRRV.

This sequence belongs to the universal ribosomal protein uS11 family. In terms of assembly, part of the 30S ribosomal subunit. Interacts with proteins S7 and S18. Binds to IF-3.

Functionally, located on the platform of the 30S subunit, it bridges several disparate RNA helices of the 16S rRNA. Forms part of the Shine-Dalgarno cleft in the 70S ribosome. The sequence is that of Small ribosomal subunit protein uS11 from Aquifex aeolicus (strain VF5).